Reading from the N-terminus, the 1010-residue chain is Sodium/potassium-transporting ATPase subunit alpha-3 (1010 aa).

The interval 1 to 21 (MGDKDDRFPKKKKGGTKDMDA) is disordered. Topologically, residues 1 to 74 (MGDKDDRFPK…NALTPPPTTP (74 aa)) are cytoplasmic. Positions 69–71 (PPP) are interaction with phosphoinositide-3 kinase. Residues 75-95 (EWVKFCRQLFGGFSILLWTGA) form a helical membrane-spanning segment. Topologically, residues 96 to 118 (ILCFLAYAIQAATEDEPAGDNLY) are extracellular. A helical membrane pass occupies residues 119–139 (LGIVLTAVVVITGCFSYFQEA). Residues 140–275 (KSSKIMESFK…TGKTPIAVEI (136 aa)) are Cytoplasmic-facing. A compositionally biased stretch (polar residues) spans 201 to 216 (DNSSLTGESEPQSRSP). The interval 201 to 221 (DNSSLTGESEPQSRSPDCTHD) is disordered. Residues 276–295 (EHFIHIITGVAVFLGVTFFI) form a helical membrane-spanning segment. Over 296–307 (LAIILGYTWLKA) the chain is Extracellular. A helical membrane pass occupies residues 308–325 (VIFLIGIIVANVPEGLLA). At 326–759 (TVTVCLTLTA…EEGRLIFDNL (434 aa)) the chain is on the cytoplasmic side. Asp-363 serves as the catalytic 4-aspartylphosphate intermediate. Mg(2+) contacts are provided by Asp-704 and Asp-708. The helical transmembrane segment at 760–779 (KKSIAYTLTSNIPEITPFLF) threads the bilayer. The Extracellular segment spans residues 780-789 (FIIVNIPLAL). A helical transmembrane segment spans residues 790-810 (GTITILCIDLGTDMGSAISLA). The Cytoplasmic portion of the chain corresponds to 811-830 (YETAESDIMKRQPRNPCRDK). A helical transmembrane segment spans residues 831 to 853 (LVNERLISIAYGQIGMIQALGGF). The Extracellular segment spans residues 854 to 905 (FSYFVILAENGFLPSQLVGIRLNWDDRSLNDLEDSYGQQWTYEQRKIVEFTC). The chain crosses the membrane as a helical span at residues 906-925 (HTAFFVSIVVVQWADLIICK). Over 926 to 938 (TRRNSVFQQGMKN) the chain is Cytoplasmic. Ser-930 is modified (phosphoserine; by PKA). Residues 939-957 (KILIFGLFEETALAAFLSY) form a helical membrane-spanning segment. Over 958–972 (CPGMDVALRMYPLKP) the chain is Extracellular. A helical membrane pass occupies residues 973-993 (TWWFWAFPYSFLIFVYDEARK). The Cytoplasmic segment spans residues 994-1010 (LILCRNPGGWVEKETYY).

Belongs to the cation transport ATPase (P-type) (TC 3.A.3) family. Type IIC subfamily. In terms of assembly, the sodium/potassium-transporting ATPase is composed of a catalytic alpha subunit, an auxiliary non-catalytic beta subunit and an additional regulatory subunit.

It is found in the cell membrane. The enzyme catalyses K(+)(out) + Na(+)(in) + ATP + H2O = K(+)(in) + Na(+)(out) + ADP + phosphate + H(+). Functionally, this is the catalytic component of the active enzyme, which catalyzes the hydrolysis of ATP coupled with the exchange of sodium and potassium ions across the plasma membrane. This action creates the electrochemical gradient of sodium and potassium ions, providing the energy for active transport of various nutrients. In Oreochromis mossambicus (Mozambique tilapia), this protein is Sodium/potassium-transporting ATPase subunit alpha-3 (atp1a3).